The following is a 309-amino-acid chain: Homoserine kinase (309 aa).

Residue 95 to 105 (PHGRGLGSSSA) participates in ATP binding.

Belongs to the GHMP kinase family. Homoserine kinase subfamily.

Its subcellular location is the cytoplasm. It carries out the reaction L-homoserine + ATP = O-phospho-L-homoserine + ADP + H(+). The protein operates within amino-acid biosynthesis; L-threonine biosynthesis; L-threonine from L-aspartate: step 4/5. Its function is as follows. Catalyzes the ATP-dependent phosphorylation of L-homoserine to L-homoserine phosphate. This is Homoserine kinase from Streptomyces coelicolor (strain ATCC BAA-471 / A3(2) / M145).